The following is a 211-amino-acid chain: GATA transcription factor 19 (211 aa).

The GATA-type zinc finger occupies 77–102 (CANCDTTSTPLWRNGPRGPKSLCNAC). Residues 111–131 (RRASTARNSTSGGGSTAAGVP) form a disordered region.

It belongs to the type IV zinc-finger family. Class B subfamily. As to quaternary structure, forms heterodimers with GATA18.

The protein resides in the nucleus. In terms of biological role, transcriptional regulator that specifically binds 5'-GATA-3' or 5'-GAT-3' motifs within gene promoters. Regulates both flower and shoot apical meristem (SAM) development, especially for establishing organ boundaries in shoots and flowers, probably by controlling the number and position of WUS-expressing cells. The polypeptide is GATA transcription factor 19 (Arabidopsis thaliana (Mouse-ear cress)).